Consider the following 163-residue polypeptide: Nucleotide-binding protein Acel_0286 (163 aa).

Belongs to the YajQ family.

In terms of biological role, nucleotide-binding protein. The protein is Nucleotide-binding protein Acel_0286 of Acidothermus cellulolyticus (strain ATCC 43068 / DSM 8971 / 11B).